The chain runs to 218 residues: Cold-regulated protein 28 (218 aa).

Disordered stretches follow at residues 1 to 51 (MEND…ADSK) and 166 to 218 (TKHS…KPRT). Residues 20-37 (EASAESQSESTLSNSLDS) are compositionally biased toward low complexity. The span at 186 to 207 (GEVSKKREREANNDDSSLKEDQ) shows a compositional bias: basic and acidic residues.

The protein resides in the nucleus. In terms of biological role, together with COR27, involved in central circadian clock regulation and in flowering promotion, by binding to the chromatin of clock-associated evening genes TOC1, PRR5, ELF4 and cold-responsive genes in order to repress their transcription. Negative regulator of freezing tolerance. The sequence is that of Cold-regulated protein 28 from Arabidopsis thaliana (Mouse-ear cress).